The primary structure comprises 902 residues: 4-hydroxyphenylacetate decarboxylase glycyl radical subunit (902 aa).

Residues 38 to 774 (KRAEDLLDVY…ATLATPDGRL (737 aa)) enclose the PFL domain. Residues Ser-348 and Cys-507 each coordinate 4-hydroxyphenylacetate. The active-site Cysteine radical intermediate is the Cys-507. Residue Glu-509 is the Proton donor of the active site. 2 residues coordinate 4-hydroxyphenylacetate: His-540 and Glu-641. The 121-residue stretch at 782–902 (GSVSAYAGTD…VIARTEYEGV (121 aa)) folds into the Glycine radical domain. Gly-877 is subject to Glycine radical.

It belongs to the glycyl radical enzyme (GRE) family. HPAD subfamily. In terms of assembly, heterooctamer consisting of 4 large (HpdB) subunits and 4 small (HpdC) subunits, arranged as a tetramer of heterodimers. Also forms a catalytically inactive homodimer. In terms of processing, requires the activating protein CsdA to generate the key active site glycyl radical that is involved in catalysis. Post-translationally, phosphorylated on serine. Phosphorylation may trigger the formation of the active heterooctamers and thereby regulates enzyme activity.

The catalysed reaction is 4-hydroxyphenylacetate + H(+) = 4-methylphenol + CO2. The enzyme catalyses 3,4-dihydroxyphenylacetate + H(+) = 4-methylcatechol + CO2. Glycyl radical subunit of the HPA decarboxylase that decarboxylates phenylacetates with a hydroxyl group in the p-position. Active toward 4-hydroxyphenylacetate and 3,4-dihydroxyphenylacetate, forming 4-methylphenol and 4-methylcatechol, respectively. Is likely involved in the catabolism of aromatic amino acids such as tyrosine fermentation. 4-methylphenol (p-cresol) formation provides metabolic toxicity, which allows an active suppression of other microbes and may provide growth advantages for the producers in highly competitive environments. The large subunit is the catalytic subunit that binds the substrate. In Clostridioides difficile (strain CD196) (Peptoclostridium difficile), this protein is 4-hydroxyphenylacetate decarboxylase glycyl radical subunit.